Consider the following 322-residue polypeptide: DNA-directed RNA polymerase subunit alpha (322 aa).

The interval 1–229 (MNFVNNLFTL…KYFDLIFSFI (229 aa)) is alpha N-terminal domain (alpha-NTD). Residues 244 to 322 (NLNLKINSVY…NLNSKIEYDL (79 aa)) are alpha C-terminal domain (alpha-CTD).

It belongs to the RNA polymerase alpha chain family. As to quaternary structure, homodimer. The RNAP catalytic core consists of 2 alpha, 1 beta, 1 beta' and 1 omega subunit. When a sigma factor is associated with the core the holoenzyme is formed, which can initiate transcription.

It carries out the reaction RNA(n) + a ribonucleoside 5'-triphosphate = RNA(n+1) + diphosphate. Functionally, DNA-dependent RNA polymerase catalyzes the transcription of DNA into RNA using the four ribonucleoside triphosphates as substrates. The polypeptide is DNA-directed RNA polymerase subunit alpha (rpoA) (Carsonella ruddii (strain PV)).